Consider the following 139-residue polypeptide: Probable transcription termination protein NusA (139 aa).

The KH domain maps to Ser97–Ala139.

This sequence belongs to the NusA family.

It is found in the cytoplasm. In terms of biological role, participates in transcription termination. The polypeptide is Probable transcription termination protein NusA (Halococcus morrhuae (Micrococcus morrhuae)).